The chain runs to 686 residues: Potassium-transporting ATPase ATP-binding subunit (686 aa).

The next 2 membrane-spanning stretches (helical) occupy residues 38-58 (VMFVVWAGSLLTTVLVVKDLV) and 64-84 (AAPLGFTVQVTLWLWFTVLFA). The interval 101 to 123 (ALRKMRKETTARRWKDGREERVP) is disordered. Basic and acidic residues predominate over residues 107–123 (KETTARRWKDGREERVP). A run of 2 helical transmembrane segments spans residues 224–244 (ILLVGLTLIFLLACVTLVPLA) and 257–277 (VALLVCLIPTTIGGLLSAIGI). Asp308 serves as the catalytic 4-aspartylphosphate intermediate. ATP-binding positions include Asp345, Glu349, 378-385 (FTAQTRMS), and Lys399. Mg(2+) contacts are provided by Asp522 and Asp526. The next 3 helical transmembrane spans lie at 592-612 (FAILPALFMGVFPQIAPLNVM), 620-640 (AVLSAVIFNALIIILLIPLAL), and 666-686 (VIVPFVGIKVIDVLLGAVGLA).

The protein belongs to the cation transport ATPase (P-type) (TC 3.A.3) family. Type IA subfamily. As to quaternary structure, the system is composed of three essential subunits: KdpA, KdpB and KdpC.

The protein localises to the cell membrane. It catalyses the reaction K(+)(out) + ATP + H2O = K(+)(in) + ADP + phosphate + H(+). Its function is as follows. Part of the high-affinity ATP-driven potassium transport (or Kdp) system, which catalyzes the hydrolysis of ATP coupled with the electrogenic transport of potassium into the cytoplasm. This subunit is responsible for energy coupling to the transport system and for the release of the potassium ions to the cytoplasm. This Myxococcus xanthus protein is Potassium-transporting ATPase ATP-binding subunit.